A 174-amino-acid polypeptide reads, in one-letter code: MERFRDGAQDAFEDLFARHAPRVQGFLARMVRNGALAEDLLQATFLSVIRSRGRYEPGTRFIPWLMTIAANAARDALRHQRHVDAYASREDTATPASAAPDDSDPSLRRHLLDALQQLHPDHREAVVLSKVEGWSFEEIGALRGISPGAARLRAHRGYEKLRELLGELELEVAR.

The Polymerase core binding signature appears at 39-52; sequence DLLQATFLSVIRSR. Residues 86-106 form a disordered region; it reads YASREDTATPASAAPDDSDPS. Positions 136-155 form a DNA-binding region, H-T-H motif; it reads FEEIGALRGISPGAARLRAH.

The protein belongs to the sigma-70 factor family. ECF subfamily.

Functionally, sigma factors are initiation factors that promote the attachment of RNA polymerase to specific initiation sites and are then released. This sigma factor regulates genes for the light induced biosynthesis of carotenoids. This chain is RNA polymerase sigma factor CarQ (carQ), found in Myxococcus xanthus.